The chain runs to 172 residues: Peptide deformylase 1 (172 aa).

Fe cation is bound by residues C91 and H133. E134 is an active-site residue. Position 137 (H137) interacts with Fe cation.

Belongs to the polypeptide deformylase family. Fe(2+) serves as cofactor.

The catalysed reaction is N-terminal N-formyl-L-methionyl-[peptide] + H2O = N-terminal L-methionyl-[peptide] + formate. In terms of biological role, removes the formyl group from the N-terminal Met of newly synthesized proteins. Requires at least a dipeptide for an efficient rate of reaction. N-terminal L-methionine is a prerequisite for activity but the enzyme has broad specificity at other positions. This chain is Peptide deformylase 1, found in Vibrio parahaemolyticus serotype O3:K6 (strain RIMD 2210633).